Reading from the N-terminus, the 844-residue chain is Protein translocase subunit SecA 1 (844 aa).

Residues Gln-91, 109 to 113 (GEGKT), and Asp-498 each bind ATP. The span at 793–813 (KSKSFGEAKHVTAEDGKEKAK) shows a compositional bias: basic and acidic residues. The interval 793 to 825 (KSKSFGEAKHVTAEDGKEKAKPQPIVKGDQVGR) is disordered. The Zn(2+) site is built by Cys-829, Cys-831, Cys-840, and His-841.

This sequence belongs to the SecA family. As to quaternary structure, monomer and homodimer. Part of the essential Sec protein translocation apparatus which comprises SecA, SecYEG and auxiliary proteins SecDF. Other proteins may also be involved. Zn(2+) serves as cofactor.

It localises to the cell membrane. The protein resides in the cytoplasm. It catalyses the reaction ATP + H2O + cellular proteinSide 1 = ADP + phosphate + cellular proteinSide 2.. In terms of biological role, part of the Sec protein translocase complex. Interacts with the SecYEG preprotein conducting channel. Has a central role in coupling the hydrolysis of ATP to the transfer of proteins into and across the cell membrane, serving as an ATP-driven molecular motor driving the stepwise translocation of polypeptide chains across the membrane. This Staphylococcus epidermidis (strain ATCC 35984 / DSM 28319 / BCRC 17069 / CCUG 31568 / BM 3577 / RP62A) protein is Protein translocase subunit SecA 1.